Consider the following 124-residue polypeptide: Putative membrane protein insertion efficiency factor (124 aa).

The interval 1 to 24 is disordered; the sequence is MHDPHGHAHTVRPPGRGRNWPGPW. Residues 12–24 show a composition bias toward low complexity; it reads RPPGRGRNWPGPW.

It belongs to the UPF0161 family.

It is found in the cell inner membrane. Its function is as follows. Could be involved in insertion of integral membrane proteins into the membrane. The polypeptide is Putative membrane protein insertion efficiency factor (Mesorhizobium japonicum (strain LMG 29417 / CECT 9101 / MAFF 303099) (Mesorhizobium loti (strain MAFF 303099))).